The sequence spans 216 residues: MQKFTLLKGLVAPMDRENVDTDAIIPKQFLKSIRKTGFGQNLFDEWRYLDAGFPGQDPKSRKPNPDFVLNQPRYQGASILLARKNFGCGSSREHAPWALDQYGFRAIIAPSYADIFFNNSFKNGLLPIVLSEIQVSQLFDEAAAFPGYALTIDLERQVIIKPDGKELPFEVQAFRKYCLLNGFDDIGLTLRQADKIKAFEAQRLAQKPWLARTLLA.

It belongs to the LeuD family. LeuD type 1 subfamily. As to quaternary structure, heterodimer of LeuC and LeuD.

The catalysed reaction is (2R,3S)-3-isopropylmalate = (2S)-2-isopropylmalate. Its pathway is amino-acid biosynthesis; L-leucine biosynthesis; L-leucine from 3-methyl-2-oxobutanoate: step 2/4. Functionally, catalyzes the isomerization between 2-isopropylmalate and 3-isopropylmalate, via the formation of 2-isopropylmaleate. This is 3-isopropylmalate dehydratase small subunit from Albidiferax ferrireducens (strain ATCC BAA-621 / DSM 15236 / T118) (Rhodoferax ferrireducens).